Consider the following 484-residue polypeptide: Cobyric acid synthase (484 aa).

The GATase cobBQ-type domain maps to valine 248–serine 435. The active-site Nucleophile is the cysteine 329. The active site involves histidine 427.

It belongs to the CobB/CobQ family. CobQ subfamily.

It participates in cofactor biosynthesis; adenosylcobalamin biosynthesis. In terms of biological role, catalyzes amidations at positions B, D, E, and G on adenosylcobyrinic A,C-diamide. NH(2) groups are provided by glutamine, and one molecule of ATP is hydrogenolyzed for each amidation. The protein is Cobyric acid synthase of Pseudomonas putida (strain GB-1).